The chain runs to 278 residues: 4-deoxy-L-threo-5-hexosulose-uronate ketol-isomerase (278 aa).

His196, His198, Glu203, and His245 together coordinate Zn(2+).

The protein belongs to the KduI family. Requires Zn(2+) as cofactor.

The catalysed reaction is 5-dehydro-4-deoxy-D-glucuronate = 3-deoxy-D-glycero-2,5-hexodiulosonate. Its pathway is glycan metabolism; pectin degradation; 2-dehydro-3-deoxy-D-gluconate from pectin: step 4/5. In terms of biological role, catalyzes the isomerization of 5-dehydro-4-deoxy-D-glucuronate to 3-deoxy-D-glycero-2,5-hexodiulosonate. The polypeptide is 4-deoxy-L-threo-5-hexosulose-uronate ketol-isomerase (Salmonella paratyphi A (strain ATCC 9150 / SARB42)).